A 318-amino-acid polypeptide reads, in one-letter code: HTH-type transcriptional regulatory protein TyrR (318 aa).

One can recognise a Sigma-54 factor interaction; truncated domain in the interval 15–239 (FIVQSEAMKS…LYNTLYRACS (225 aa)). ATP contacts are provided by residues 43 to 50 (GETGSGKD) and 101 to 110 (ANKGTVLLDG). Residues 292 to 312 (STRKLAQRLGVSHTAIANKLK) constitute a DNA-binding region (H-T-H motif).

Homodimer. In presence of tyrosine (or high concentrations of phenylalanine or tryptophan) and ATP, it self-associates to form a hexamer.

The protein resides in the cytoplasm. With respect to regulation, the DNA binding ability is drastically reduced in the presence of ATP. Tyrosine further reduces the binding affinity of TyrR in the presence of ATP. Its function is as follows. Transcriptional regulator of the TyrR regulon, which includes a number of genes coding for proteins involved in the biosynthesis or transport of the three aromatic amino acids, phenylalanine, tyrosine and tryptophan. These three aromatic amino acids act as effectors which bind to the TyrR protein to form an active regulatory protein. Acts by binding specifically to TyrR boxes in the promoter region of the target genes. Can efficiently repress the transcription of the aroF promoter, but lacks the ability to function as a transcriptional activator. The protein is HTH-type transcriptional regulatory protein TyrR of Haemophilus influenzae (strain ATCC 51907 / DSM 11121 / KW20 / Rd).